A 274-amino-acid polypeptide reads, in one-letter code: Penicillin-insensitive murein endopeptidase (274 aa).

The N-terminal stretch at 1 to 19 (MKKTALALLALLVSSASLA) is a signal peptide. 3 disulfides stabilise this stretch: C44–C265, C187–C235, and C216–C223. Residues H110, H113, D120, D147, H150, and H211 each contribute to the Zn(2+) site. The disordered stretch occupies residues 225 to 274 (DQPLPPPGDGCGAELQSWFEPPEPGTTKPEKKTPPPLPPSCQALLDEHVL).

It belongs to the peptidase M74 family. Dimer. Zn(2+) serves as cofactor.

The protein resides in the periplasm. Its function is as follows. Murein endopeptidase that cleaves the D-alanyl-meso-2,6-diamino-pimelyl amide bond that connects peptidoglycan strands. Likely plays a role in the removal of murein from the sacculus. The sequence is that of Penicillin-insensitive murein endopeptidase from Citrobacter koseri (strain ATCC BAA-895 / CDC 4225-83 / SGSC4696).